The chain runs to 211 residues: Protein YCF54, chloroplastic (211 aa).

A chloroplast-targeting transit peptide spans 1–80; that stretch reads MWSVTGALTV…GESTKYHFLV (80 aa).

The protein belongs to the ycf54 family. Interacts with LFNR1 and CRD1/CHL27 in chloroplasts.

It is found in the plastid. It localises to the chloroplast. Functionally, involved in the biosynthesis of chlorophyll; acts probably as a scaffolding factor in the MgProto monomethylester (MgProtoME) cyclase complex to stabilize CRD1/CHL27, the catalytic subunit which catalyzes the formation of a fifth isocyclic ring to tetrapyrroles to form protochlorophyllide. In Arabidopsis thaliana (Mouse-ear cress), this protein is Protein YCF54, chloroplastic.